The sequence spans 847 residues: Glucans biosynthesis glucosyltransferase H (847 aa).

The Cytoplasmic portion of the chain corresponds to 1–138 (MNKTTEYIDA…KWRTVGTIRR (138 aa)). A helical transmembrane segment spans residues 139 to 156 (YILLILTLAQTVVATWYM). Residues 157–193 (KTILPYQGWALINPMDMVGQDIWVSFMQLLPYMLQTG) lie on the Periplasmic side of the membrane. Residues 194-216 (ILILFAVLFCWVSAGFWTALMGF) form a helical membrane-spanning segment. The Cytoplasmic segment spans residues 217-511 (LQLLIGRDKY…LVKGMHPVHR (295 aa)). A helical transmembrane segment spans residues 512–534 (AVFLTGVMSYLSAPLWFMFLALS). The Periplasmic portion of the chain corresponds to 535-567 (TALQVVHALTEPQYFLQPRQLFPVWPQWRPELA). A helical transmembrane segment spans residues 568-590 (IALFASTMVLLFLPKLLSIMLIW). The Cytoplasmic portion of the chain corresponds to 591–602 (CKGTKEYGGFWR). A helical transmembrane segment spans residues 603–625 (VTLSLLLEVLFSVLLAPVRMLFH). Over 626–679 (TVFVVSAFLGWEVVWNSPQRDDDSTPWGEAFMRHGSQLLLGLVWAVGMAWLDLR) the chain is Periplasmic. The chain crosses the membrane as a helical span at residues 680 to 702 (FLFWLAPIVFSLILSPFVSVISS). Residues 703–847 (RSTVGLRTKR…ALQGRTSSAR (145 aa)) lie on the Cytoplasmic side of the membrane.

This sequence belongs to the glycosyltransferase 2 family. OpgH subfamily.

Its subcellular location is the cell inner membrane. Its pathway is glycan metabolism; osmoregulated periplasmic glucan (OPG) biosynthesis. Involved in the biosynthesis of osmoregulated periplasmic glucans (OPGs). The chain is Glucans biosynthesis glucosyltransferase H from Salmonella typhimurium (strain LT2 / SGSC1412 / ATCC 700720).